The sequence spans 175 residues: MSKKINNNKTPRNKVKNNNVSKDNDDIVISLRYENWVKEERVNSLTTYTKDENQFLKNIIYILNTLFPYVYKNWKNKGINDHCHPIKQNNVFSKYIKLIKKLHPNLLKNDNEELELYQLGLGRSVRVICSKIDNILFPLLIDHHHLGYESQSYNDKDTKKYDYCPLRKYNKNQDN.

The segment covering 1–10 (MSKKINNNKT) has biased composition (polar residues). Positions 1 to 21 (MSKKINNNKTPRNKVKNNNVS) are disordered.

This is an uncharacterized protein from Ureaplasma parvum serovar 3 (strain ATCC 700970).